The primary structure comprises 317 residues: Melanocyte-stimulating hormone receptor (317 aa).

Over Met1–Glu37 the chain is Extracellular. Asn29 carries N-linked (GlcNAc...) asparagine glycosylation. The chain crosses the membrane as a helical span at residues Val38–Ile63. At Ala64–Pro72 the chain is on the cytoplasmic side. Residues Met73–Leu93 traverse the membrane as a helical segment. The Extracellular segment spans residues Glu94–Asn118. The helical transmembrane segment at Val119–Val140 threads the bilayer. Residues Asp141–Arg163 are Cytoplasmic-facing. A helical transmembrane segment spans residues Ala164–Tyr183. Residues Asp184 to Cys191 are Extracellular-facing. Residues Leu192 to Leu211 form a helical membrane-spanning segment. The Cytoplasmic segment spans residues Ala212 to Ala240. A helical membrane pass occupies residues Ala241–Leu266. At Cys267–Asn279 the chain is on the extracellular side. Residues Phe280–Phe300 form a helical membrane-spanning segment. Residues Arg301–Trp317 are Cytoplasmic-facing. The S-palmitoyl cysteine moiety is linked to residue Cys315.

The protein belongs to the G-protein coupled receptor 1 family. Interacts with MGRN1, but does not undergo MGRN1-mediated ubiquitination; this interaction competes with GNAS-binding and thus inhibits agonist-induced cAMP production. Interacts with OPN3; the interaction results in a decrease in MC1R-mediated cAMP signaling and ultimately a decrease in melanin production in melanocytes. Expressed in the adrenal gland.

The protein localises to the cell membrane. Receptor for MSH (alpha, beta and gamma) and ACTH. The activity of this receptor is mediated by G proteins which activate adenylate cyclase. Mediates melanogenesis, the production of eumelanin (black/brown) and phaeomelanin (red/yellow), via regulation of cAMP signaling in melanocytes. In Macaca mulatta (Rhesus macaque), this protein is Melanocyte-stimulating hormone receptor (MC1R).